The primary structure comprises 89 residues: Small ribosomal subunit protein bS20 (89 aa).

It belongs to the bacterial ribosomal protein bS20 family.

Binds directly to 16S ribosomal RNA. This is Small ribosomal subunit protein bS20 from Helicobacter acinonychis (strain Sheeba).